The sequence spans 263 residues: Virulence plasmid protein pGP6-D-related protein (263 aa).

The protein belongs to the UPF0137 (pGP6-D) family.

In Chlamydia trachomatis serovar D (strain ATCC VR-885 / DSM 19411 / UW-3/Cx), this protein is Virulence plasmid protein pGP6-D-related protein.